The primary structure comprises 476 residues: MGIDTGTTATPRTLAEKVWDDHVVVSGGANEPDLIYIDLHLVHEVTSPQAFDGLRLAGRPVRRPDLTLATEDHNVPTVDIDKPIADPVSRTQVETLRRNCAEFGVRLYPMGDAEQGIVHVVGPQLGLTQPGMTVVCGDSHTSTHGAFGALAMGIGTSEVEHVLATQTLPLRPFKTMAVNVDGELPAGVTAKDIILALIAKIGTGGGQGHVIEYRGSAIESLSMEGRMTVCNMSIEAGARAGMIAPDDTTYEFLRDRPHAPKGAQWDAAMRYWQQLRTDPGAVFDTEVYLDAASLSPFVTWGTNPGQGVPLAAAVPDPELMTDDAERQAAEKALAYMDLRPGTPMRDIAVDAVFVGSCTNGRIEDLRVVADVLRGRKVAPGVRMLVVPGSMRVRAQAEAEGLGEVFTAAGAEWRQAGCSMCLGMNPDQLAPGERCAATSNRNFEGRQGKGGRTHLVSPAVAAATAVRGTLSAPADLD.

[4Fe-4S] cluster-binding residues include Cys-357, Cys-417, and Cys-420.

Belongs to the aconitase/IPM isomerase family. LeuC type 1 subfamily. In terms of assembly, heterodimer of LeuC and LeuD. [4Fe-4S] cluster is required as a cofactor.

It catalyses the reaction (2R,3S)-3-isopropylmalate = (2S)-2-isopropylmalate. Its pathway is amino-acid biosynthesis; L-leucine biosynthesis; L-leucine from 3-methyl-2-oxobutanoate: step 2/4. Catalyzes the isomerization between 2-isopropylmalate and 3-isopropylmalate, via the formation of 2-isopropylmaleate. This is 3-isopropylmalate dehydratase large subunit from Mycolicibacterium paratuberculosis (strain ATCC BAA-968 / K-10) (Mycobacterium paratuberculosis).